Here is a 344-residue protein sequence, read N- to C-terminus: Transcription factor HRS1 (344 aa).

Positions 88 to 184 (IKDSSTSNEE…DGGGGRKQRR (97 aa)) are disordered. The segment covering 95–104 (NEEEDEEFDD) has biased composition (acidic residues). 2 stretches are compositionally biased toward basic and acidic residues: residues 105-124 (EHGN…KSDW) and 138-178 (LLPK…DGGG). An HTH myb-type domain is found at 178–238 (GGRKQRRCWS…HLQKYRLHTR (61 aa)). The H-T-H motif DNA-binding region spans 209 to 234 (PKQIREFMKVDGLTNDEVKSHLQKYR). Over residues 269-291 (STGKTTGGATTSSTTTTTGIYGT) the composition is skewed to low complexity. Positions 269 to 322 (STGKTTGGATTSSTTTTTGIYGTMAAPPPPQWPSHSNYRPSIIVDEGSGSHSEG) are disordered.

As to expression, expressed in the root hair region and root hair cells.

The protein localises to the nucleus. Its function is as follows. Transcription factor involved in nitrate and phosphate signaling in roots. Integrates nitrate and phosphate starvation responses and adaptation of root architecture depending on nutrient availabilities. Acts downstream of the nitrate sensor and transporter NPF6.3/NRT1.1. Represses primary root development in response to phosphate deficiency conditions, only when nitrate is present. Involved in the modulation of primary root and root hair growth in phosphate-deprived environment. May be required for suppressing abscisic acid (ABA) signaling in germinating embryo axis, which promotes the timely germination of seeds. The polypeptide is Transcription factor HRS1 (Arabidopsis thaliana (Mouse-ear cress)).